The primary structure comprises 298 residues: Lipoyl synthase 1 (298 aa).

[4Fe-4S] cluster is bound by residues Cys34, Cys39, Cys45, Cys60, Cys64, Cys67, and Ser274. The region spanning Phe46–Leu263 is the Radical SAM core domain. The tract at residues Ala277–Glu298 is disordered.

It belongs to the radical SAM superfamily. Lipoyl synthase family. Requires [4Fe-4S] cluster as cofactor.

The protein localises to the cytoplasm. The catalysed reaction is [[Fe-S] cluster scaffold protein carrying a second [4Fe-4S](2+) cluster] + N(6)-octanoyl-L-lysyl-[protein] + 2 oxidized [2Fe-2S]-[ferredoxin] + 2 S-adenosyl-L-methionine + 4 H(+) = [[Fe-S] cluster scaffold protein] + N(6)-[(R)-dihydrolipoyl]-L-lysyl-[protein] + 4 Fe(3+) + 2 hydrogen sulfide + 2 5'-deoxyadenosine + 2 L-methionine + 2 reduced [2Fe-2S]-[ferredoxin]. The protein operates within protein modification; protein lipoylation via endogenous pathway; protein N(6)-(lipoyl)lysine from octanoyl-[acyl-carrier-protein]: step 2/2. In terms of biological role, catalyzes the radical-mediated insertion of two sulfur atoms into the C-6 and C-8 positions of the octanoyl moiety bound to the lipoyl domains of lipoate-dependent enzymes, thereby converting the octanoylated domains into lipoylated derivatives. The protein is Lipoyl synthase 1 of Gloeobacter violaceus (strain ATCC 29082 / PCC 7421).